The chain runs to 1034 residues: N-acetyl-beta-glucosaminyl-glycoprotein 4-beta-N-acetylgalactosaminyltransferase 1 (1034 aa).

Over 1-12 (MPWFPVKKVRKQ) the chain is Cytoplasmic. The helical; Signal-anchor for type II membrane protein transmembrane segment at 13–31 (MKLLLLLLLLTCAAWLTYV) threads the bilayer. Topologically, residues 32–1034 (HRSLVRPGRA…SRKGARAQRS (1003 aa)) are lumenal. The segment at 51–104 (DGEKLTGVTDSRGVRVPSSTQRSEDSSESHEEEQAPEGRGPNMLFPGGPRKPPP) is disordered. Over residues 72–83 (RSEDSSESHEEE) the composition is skewed to basic and acidic residues. Asn-106 is a glycosylation site (N-linked (GlcNAc...) asparagine). The PA14 domain maps to 109 to 279 (HQTPPWREEF…LKFEIIDSAH (171 aa)). 2 disordered regions span residues 450-486 (PTDA…DEQT) and 556-600 (RVQL…QLHG). A compositionally biased stretch (low complexity) spans 461–473 (TPTPAASTGTTAS). The N-linked (GlcNAc...) asparagine glycan is linked to Asn-611. Disordered stretches follow at residues 626–669 (SQVS…PLGR) and 782–801 (GDED…HPDS). A compositionally biased stretch (acidic residues) spans 636-661 (EGEEGEEDGAPGDEATSEDSEEEEEP).

The protein belongs to the chondroitin N-acetylgalactosaminyltransferase family.

Its subcellular location is the golgi apparatus. The protein localises to the golgi stack membrane. The enzyme catalyses an N-acetyl-beta-D-glucosaminyl derivative + UDP-N-acetyl-alpha-D-galactosamine = an N-acetyl-beta-D-galactosaminyl-(1-&gt;4)-N-acetyl-beta-D-glucosaminyl derivative + UDP + H(+). In terms of biological role, transfers N-acetylgalactosamine (GalNAc) from UDP-GalNAc to N-acetylglucosamine-beta-benzyl with a beta-1,4-linkage to form N,N'-diacetyllactosediamine, GalNAc-beta-1,4-GlcNAc structures in N-linked glycans and probably O-linked glycans. The protein is N-acetyl-beta-glucosaminyl-glycoprotein 4-beta-N-acetylgalactosaminyltransferase 1 (B4galnt4) of Mus musculus (Mouse).